A 431-amino-acid chain; its full sequence is Serine--tRNA ligase (431 aa).

235 to 237 (TAE) contributes to the L-serine binding site. ATP contacts are provided by residues 266-268 (RRE) and valine 282. Glutamate 289 serves as a coordination point for L-serine. 353–356 (EASS) provides a ligand contact to ATP. Serine 389 provides a ligand contact to L-serine.

Belongs to the class-II aminoacyl-tRNA synthetase family. Type-1 seryl-tRNA synthetase subfamily. In terms of assembly, homodimer. The tRNA molecule binds across the dimer.

It is found in the cytoplasm. It catalyses the reaction tRNA(Ser) + L-serine + ATP = L-seryl-tRNA(Ser) + AMP + diphosphate + H(+). It carries out the reaction tRNA(Sec) + L-serine + ATP = L-seryl-tRNA(Sec) + AMP + diphosphate + H(+). It participates in aminoacyl-tRNA biosynthesis; selenocysteinyl-tRNA(Sec) biosynthesis; L-seryl-tRNA(Sec) from L-serine and tRNA(Sec): step 1/1. Its function is as follows. Catalyzes the attachment of serine to tRNA(Ser). Is also able to aminoacylate tRNA(Sec) with serine, to form the misacylated tRNA L-seryl-tRNA(Sec), which will be further converted into selenocysteinyl-tRNA(Sec). This is Serine--tRNA ligase from Prosthecochloris aestuarii (strain DSM 271 / SK 413).